The chain runs to 110 residues: FMRFamide-like neuropeptides 11 (110 aa).

A signal peptide spans 1 to 22 (MTQFSALALLLIVFVAASFAQS). Positions 23–29 (YDDVSAE) are excised as a propeptide. Phenylalanine amide is present on residues F40 and F54. Residues 60–85 (LDEEDFAPESPLQGKRNGAPQPFVRF) form a disordered region. The residue at position 72 (Q72) is a Glutamine amide. A Phenylalanine amide modification is found at F85. Positions 88-110 (SGQLDHMHDLLSTLQKLKFANNK) are excised as a propeptide.

This sequence belongs to the FARP (FMRFamide related peptide) family. As to expression, each flp gene is expressed in a distinct set of neurons. Flp-11 is expressed in the DD, VD and DVB motor neurons, the PVC and URX interneurons, and the AUA, BAG, DA, LUA, and SAB neurons. Also expressed in head muscle, socket or sheath cells and uterine cells. Expressed exclusively in PHC sensory neurons in males. Expressed in AVK and RIS interneurons.

It is found in the secreted. FMRFamides and FMRFamide-like peptides are neuropeptides. Induces sleep-like quiescence behavior following release from RIS interneuron. Helps to sustain locomotion stop after gamma-aminobutyric acid (GABA) induces fast slowing response. Inhibits the late-stage body bend swimming frequency in animals through several receptors including frpr-3, npr-4 and npr-22. Its function is as follows. Potent inhibitor of the activity of the dissected pharyngeal myogenic muscle system. Acts as a ligand for the npr-22 receptor in vitro. Functionally, acts as a ligand for the npr-22 receptor in vitro. This is FMRFamide-like neuropeptides 11 from Caenorhabditis elegans.